Reading from the N-terminus, the 304-residue chain is Glycosyltransferase AglE (304 aa).

This sequence belongs to the glycosyltransferase 2 family.

It is found in the cell membrane. It functions in the pathway cell surface structure biogenesis; S-layer biogenesis. Functionally, involved in the assembly of a N-linked pentasaccharide that decorates the S-layer glycoprotein and flagellins. Catalyzes the addition to the dolichol phosphate carrier of the hexuronic acid found at position 4 of the pentasaccharide. In Haloferax volcanii (strain ATCC 29605 / DSM 3757 / JCM 8879 / NBRC 14742 / NCIMB 2012 / VKM B-1768 / DS2) (Halobacterium volcanii), this protein is Glycosyltransferase AglE (aglE).